The primary structure comprises 195 residues: Imidazoleglycerol-phosphate dehydratase (195 aa).

This sequence belongs to the imidazoleglycerol-phosphate dehydratase family.

Its subcellular location is the cytoplasm. The catalysed reaction is D-erythro-1-(imidazol-4-yl)glycerol 3-phosphate = 3-(imidazol-4-yl)-2-oxopropyl phosphate + H2O. Its pathway is amino-acid biosynthesis; L-histidine biosynthesis; L-histidine from 5-phospho-alpha-D-ribose 1-diphosphate: step 6/9. The polypeptide is Imidazoleglycerol-phosphate dehydratase (Cupriavidus taiwanensis (strain DSM 17343 / BCRC 17206 / CCUG 44338 / CIP 107171 / LMG 19424 / R1) (Ralstonia taiwanensis (strain LMG 19424))).